Consider the following 187-residue polypeptide: ATP synthase subunit b, chloroplastic (187 aa).

Residues 29 to 49 (LAVVLGVLIYLGKGVCAGCIL) form a helical membrane-spanning segment.

This sequence belongs to the ATPase B chain family. As to quaternary structure, F-type ATPases have 2 components, F(1) - the catalytic core - and F(0) - the membrane proton channel. F(1) has five subunits: alpha(3), beta(3), gamma(1), delta(1), epsilon(1). F(0) has four main subunits: a(1), b(1), b'(1) and c(10-14). The alpha and beta chains form an alternating ring which encloses part of the gamma chain. F(1) is attached to F(0) by a central stalk formed by the gamma and epsilon chains, while a peripheral stalk is formed by the delta, b and b' chains.

It is found in the plastid. It localises to the chloroplast thylakoid membrane. In terms of biological role, f(1)F(0) ATP synthase produces ATP from ADP in the presence of a proton or sodium gradient. F-type ATPases consist of two structural domains, F(1) containing the extramembraneous catalytic core and F(0) containing the membrane proton channel, linked together by a central stalk and a peripheral stalk. During catalysis, ATP synthesis in the catalytic domain of F(1) is coupled via a rotary mechanism of the central stalk subunits to proton translocation. Its function is as follows. Component of the F(0) channel, it forms part of the peripheral stalk, linking F(1) to F(0). The sequence is that of ATP synthase subunit b, chloroplastic from Angiopteris evecta (Mule's foot fern).